The chain runs to 570 residues: CRISPR-associated protein Cas8a1/Csx13 (570 aa).

Disordered stretches follow at residues 1-23 and 551-570; these read MACM…AGLR and GGEA…SEQS.

The protein belongs to the CRISPR-associated protein Cas8a1/Csx13 family. Myxan subtype subfamily.

Functionally, CRISPR (clustered regularly interspaced short palindromic repeat) is an adaptive immune system that provides protection against mobile genetic elements (viruses, transposable elements and conjugative plasmids). CRISPR clusters contain spacers, sequences complementary to antecedent mobile elements, and target invading nucleic acids. CRISPR clusters are transcribed and processed into CRISPR RNA (crRNA). In terms of biological role, functions in an unknown fashion to stimulate transcription of fruA independently of the intracellular A- and E-developmental signals. This Myxococcus xanthus (strain DK1622) protein is CRISPR-associated protein Cas8a1/Csx13 (devT).